Reading from the N-terminus, the 294-residue chain is Bifunctional protein FolD (294 aa).

NADP(+) contacts are provided by residues 164–166 (GRS), S193, and I234.

This sequence belongs to the tetrahydrofolate dehydrogenase/cyclohydrolase family. In terms of assembly, homodimer.

The enzyme catalyses (6R)-5,10-methylene-5,6,7,8-tetrahydrofolate + NADP(+) = (6R)-5,10-methenyltetrahydrofolate + NADPH. It carries out the reaction (6R)-5,10-methenyltetrahydrofolate + H2O = (6R)-10-formyltetrahydrofolate + H(+). It functions in the pathway one-carbon metabolism; tetrahydrofolate interconversion. Its function is as follows. Catalyzes the oxidation of 5,10-methylenetetrahydrofolate to 5,10-methenyltetrahydrofolate and then the hydrolysis of 5,10-methenyltetrahydrofolate to 10-formyltetrahydrofolate. The protein is Bifunctional protein FolD of Flavobacterium psychrophilum (strain ATCC 49511 / DSM 21280 / CIP 103535 / JIP02/86).